Here is a 71-residue protein sequence, read N- to C-terminus: Large ribosomal subunit protein bL31 (71 aa).

Zn(2+) contacts are provided by Cys-16, Cys-18, Cys-37, and Cys-40.

The protein belongs to the bacterial ribosomal protein bL31 family. Type A subfamily. In terms of assembly, part of the 50S ribosomal subunit. It depends on Zn(2+) as a cofactor.

Functionally, binds the 23S rRNA. This chain is Large ribosomal subunit protein bL31, found in Wigglesworthia glossinidia brevipalpis.